We begin with the raw amino-acid sequence, 71 residues long: Large ribosomal subunit protein bL31 (71 aa).

Zn(2+) contacts are provided by cysteine 16, cysteine 18, cysteine 38, and cysteine 41.

The protein belongs to the bacterial ribosomal protein bL31 family. Type A subfamily. Part of the 50S ribosomal subunit. The cofactor is Zn(2+).

Functionally, binds the 23S rRNA. This chain is Large ribosomal subunit protein bL31, found in Francisella tularensis subsp. novicida (strain U112).